A 74-amino-acid chain; its full sequence is Cecropin-P4 (74 aa).

Residues M1–S13 form the signal peptide. A propeptide spans H45–L74 (removed in mature form). The disordered stretch occupies residues H51 to L74.

Belongs to the cecropin family. Expressed in the body wall, intestine, uterus and ovary.

It is found in the secreted. Functionally, has antibacterial activity against several Gram-positive and Gram-negative bacteria. Is weakly active against yeasts. Acts by a nonpore mechanism. The sequence is that of Cecropin-P4 (ASCEC-4) from Ascaris suum (Pig roundworm).